The following is a 247-amino-acid chain: UPF0259 membrane protein BUsg_265 (247 aa).

Transmembrane regions (helical) follow at residues 20 to 40 (IKIIIFISVLAAFISILINVL), 82 to 102 (IFKIFEFLISKTFLLGSIITL), 114 to 134 (IQFSLNSLCKFLPSLFILNFI), 137 to 157 (FFIQIGFMFFIFPGIFLSVLL), 188 to 208 (IVGTSVLFWMCVKFILTTVFS), and 217 to 237 (FIFLILNINMNIFFSILIVYL).

It belongs to the UPF0259 family.

The protein resides in the cell membrane. In Buchnera aphidicola subsp. Schizaphis graminum (strain Sg), this protein is UPF0259 membrane protein BUsg_265.